A 355-amino-acid chain; its full sequence is Uroporphyrinogen decarboxylase (355 aa).

Substrate is bound by residues 27-31 (RQAGR), Asp-77, Tyr-154, Thr-209, and His-328.

It belongs to the uroporphyrinogen decarboxylase family. As to quaternary structure, homodimer.

It is found in the cytoplasm. The catalysed reaction is uroporphyrinogen III + 4 H(+) = coproporphyrinogen III + 4 CO2. It functions in the pathway porphyrin-containing compound metabolism; protoporphyrin-IX biosynthesis; coproporphyrinogen-III from 5-aminolevulinate: step 4/4. Catalyzes the decarboxylation of four acetate groups of uroporphyrinogen-III to yield coproporphyrinogen-III. This Colwellia psychrerythraea (strain 34H / ATCC BAA-681) (Vibrio psychroerythus) protein is Uroporphyrinogen decarboxylase.